A 477-amino-acid chain; its full sequence is Interferon gamma receptor 1 (477 aa).

The signal sequence occupies residues 1 to 25 (MGPQAAAGRMILLVVLMLSAKVGSG). Residues 26 to 254 (ALTSTEDPEP…PPFHDDRKDS (229 aa)) are Extracellular-facing. N-linked (GlcNAc...) asparagine glycans are attached at residues Asn-61 and Asn-85. 4 disulfides stabilise this stretch: Cys-83-Cys-91, Cys-128-Cys-174, Cys-203-Cys-208, and Cys-222-Cys-243. The helical transmembrane segment at 255 to 275 (IWILVVAPLTVFTVVILVFAY) threads the bilayer. Residues 276–477 (WYTKKNSFKR…RLTGEAQELS (202 aa)) lie on the Cytoplasmic side of the membrane. Disordered regions lie at residues 335-386 (TVTA…LSSN) and 402-446 (SDSG…SGYD). Ser-362 carries the phosphoserine modification. Thr-367 bears the Phosphothreonine mark. Ser-370 is subject to Phosphoserine. 2 positions are modified to phosphothreonine: Thr-373 and Thr-375. Residues 375-386 (TQRRSFSLLSSN) are compositionally biased toward polar residues. A phosphoserine mark is found at Ser-379 and Ser-402. Residues 402 to 416 (SDSGLVGSGSSISDL) are compositionally biased toward low complexity. A Phosphotyrosine modification is found at Tyr-445.

The protein belongs to the type II cytokine receptor family. As to quaternary structure, monomer. Heterodimer with IFNGR2, to form the IFNG receptor complex. Interacts with JAK1. Interacts (when phosphorylated) with STAT1. Interacts with SOCS1. In terms of processing, phosphorylated at Ser/Thr residues. Phosphorylation of Tyr-445 is required for IFNG receptor signal transduction. Influenza virus infection leads to phosphorylation in a CSNK1A1-dependent manner. Post-translationally, ubiquitinated after phosphorylation in a CSNK1A1-dependent manner, leading to the lysosome-dependent degradation. Proteasomally degraded through 'Lys-48'-mediated ubiquitination. Ubiquitination is necessary for efficient IFNGR1 signaling.

The protein resides in the cell membrane. Receptor subunit for interferon gamma/INFG that plays crucial roles in antimicrobial, antiviral, and antitumor responses by activating effector immune cells and enhancing antigen presentation (, PubMed:20926559, PubMed:27286456). Associates with transmembrane accessory factor IFNGR2 to form a functional receptor. Upon ligand binding, the intracellular domain of IFNGR1 opens out to allow association of downstream signaling components JAK1 and JAK2. In turn, activated JAK1 phosphorylates IFNGR1 to form a docking site for STAT1. Subsequent phosphorylation of STAT1 leads to its dimerization, translocation to the nucleus, and stimulation of target gene transcription. STAT3 can also be activated in a similar manner although activation seems weaker. IFNGR1 intracellular domain phosphorylation also provides a docking site for SOCS1 that regulates the JAK-STAT pathway by competing with STAT1 binding to IFNGR1. The protein is Interferon gamma receptor 1 of Mus musculus (Mouse).